The sequence spans 104 residues: Small ribosomal subunit protein uS10 (104 aa).

This sequence belongs to the universal ribosomal protein uS10 family. Part of the 30S ribosomal subunit.

Functionally, involved in the binding of tRNA to the ribosomes. The sequence is that of Small ribosomal subunit protein uS10 from Alkaliphilus metalliredigens (strain QYMF).